Consider the following 463-residue polypeptide: MTRYFSIVLSLLLAVSCVFLPVASARQQQHQPLDRIVAVVDDNVVLKSELDRAIHNVKSQYVGHEGQLPPDEVLQRQVLERLILIKLQVARAQTNGIRVSDDELNQAISSIAENNKTSVDGLRQKLVAEGISFPEFRQSVRDEITVHHLRQGFAQSRIVVSEGEVDTALAQANSGAQYHLQHILVSLPDGATSEQIAIAQKKINGIKSVIDKGELAFSAAAVRYSDSPNALESGDLGWRSLDEIPEAFAQMVQTMKPGQIVGPLRGTSGFQLLKLVEVRDSTAAAGPRQMATEYHARHILVRITDKQKEAQAKAKIDTLRARIAGGADFQTVARESSEDANNSNQGGDLGWFPSDAFGADFGNHVKALADGNVSEPFRSAAGWHIVQRLGTRQTDVTRENQRAQIRDTIGQRKLEESYERFLRELRSEAYVSLQIEEPADDHHTPSAAVTPATGAVLPAATKH.

Residues 1–25 (MTRYFSIVLSLLLAVSCVFLPVASA) form the signal peptide. 2 consecutive PpiC domains span residues 175–277 (GAQY…KLVE) and 291–390 (ATEY…QRLG). The disordered stretch occupies residues 439 to 463 (ADDHHTPSAAVTPATGAVLPAATKH).

The protein localises to the periplasm. It catalyses the reaction [protein]-peptidylproline (omega=180) = [protein]-peptidylproline (omega=0). In terms of biological role, chaperone involved in the correct folding and assembly of outer membrane proteins. Recognizes specific patterns of aromatic residues and the orientation of their side chains, which are found more frequently in integral outer membrane proteins. May act in both early periplasmic and late outer membrane-associated steps of protein maturation. The chain is Chaperone SurA from Xylella fastidiosa (strain Temecula1 / ATCC 700964).